The following is a 1197-amino-acid chain: Serine/threonine-protein kinase pakA (1197 aa).

Disordered regions lie at residues 1–96, 328–383, 430–468, 485–543, and 562–819; these read MEEK…PIYR, QKED…KNID, REEEEENEDRVERELASRRRQEEDRIKREEEEEEEEQRN, EEEE…NLMG, and NSSG…RVGT. Residues 19–30 are compositionally biased toward basic and acidic residues; the sequence is QKFEQFLDKTDK. Positions 34–49 are enriched in polar residues; that stretch reads ATRNNYRGPVSSSTGI. Over residues 51 to 69 the composition is skewed to basic and acidic residues; that stretch reads NDKEKKSHSYFKVREEGSN. The segment covering 70–79 has biased composition (polar residues); that stretch reads KRPSSFSASN. 2 stretches are compositionally biased toward low complexity: residues 80-94 and 346-381; these read PITPSSPQSTHSSPI and NNNNNENNENDNNNNNNNNNNNNNNNNNNNNNNNKN. Positions 439-458 are enriched in basic and acidic residues; the sequence is RVERELASRRRQEEDRIKRE. Low complexity predominate over residues 494 to 523; the sequence is SQLQSSQQQQKSSSTQRSSNTVTSTSSSST. Residues 524 to 536 show a composition bias toward polar residues; the sequence is GGDSNPSTSQKPT. Position 585 is a phosphothreonine; by PKB (T585). Polar residues predominate over residues 593–615; that stretch reads SENTPLVSSIDNNGVNNKMSRSH. 2 stretches are compositionally biased toward low complexity: residues 636–653 and 671–707; these read NVNNSNNNNNNNNINNNH and SSSMSTPSISPSQAGNSATSTVPSSPISASTSMSSPT. Polar residues predominate over residues 718-727; sequence TTSTGSTRKG. The span at 728–737 shows a compositional bias: basic and acidic residues; it reads SISEREDKKK. Over residues 739–756 the composition is skewed to low complexity; it reads SSSSTSSSSSSNGGLSSS. Residues 757 to 790 show a composition bias toward basic and acidic residues; the sequence is GKDHKKDHSSEEKEKEKKSFFNKLFSKEKKDHHS. Residues 817–830 enclose the CRIB domain; the sequence is VGTPFNVKHDVHVN. In terms of domain architecture, Protein kinase spans 911 to 1164; the sequence is YYNINKIGEG…SSSLLHHPFL (254 aa). Residues 917-925 and K940 each bind ATP; that span reads IGEGGAGEV. D1032 functions as the Proton acceptor in the catalytic mechanism.

This sequence belongs to the protein kinase superfamily. STE Ser/Thr protein kinase family. STE20 subfamily. Mg(2+) is required as a cofactor. Post-translationally, phosphorylation on Thr-585 results in cAMP-mediated activation and localization to the cytoskeleton. In terms of tissue distribution, colocalizes with myosin II to the cleavage furrow of cells undergoing cytokinesis and the posterior cortex of polarized cells.

It localises to the cytoplasm. The protein localises to the cytosol. Its subcellular location is the cytoskeleton. The catalysed reaction is L-seryl-[protein] + ATP = O-phospho-L-seryl-[protein] + ADP + H(+). The enzyme catalyses L-threonyl-[protein] + ATP = O-phospho-L-threonyl-[protein] + ADP + H(+). Regulator of the myosin II component of the cytoskeleton: required for regulation of cytokinesis. Functions during chemotaxis, required for maintaining the direction of cell movement, suppressing lateral pseudopod extension, and proper retraction of the posterior of chemotaxing cells. The chain is Serine/threonine-protein kinase pakA (pakA) from Dictyostelium discoideum (Social amoeba).